The sequence spans 179 residues: Large ribosomal subunit protein uL5 (179 aa).

This sequence belongs to the universal ribosomal protein uL5 family. In terms of assembly, part of the 50S ribosomal subunit; part of the 5S rRNA/L5/L18/L25 subcomplex. Contacts the 5S rRNA and the P site tRNA. Forms a bridge to the 30S subunit in the 70S ribosome.

Functionally, this is one of the proteins that bind and probably mediate the attachment of the 5S RNA into the large ribosomal subunit, where it forms part of the central protuberance. In the 70S ribosome it contacts protein S13 of the 30S subunit (bridge B1b), connecting the 2 subunits; this bridge is implicated in subunit movement. Contacts the P site tRNA; the 5S rRNA and some of its associated proteins might help stabilize positioning of ribosome-bound tRNAs. This is Large ribosomal subunit protein uL5 from Lawsonia intracellularis (strain PHE/MN1-00).